Reading from the N-terminus, the 1784-residue chain is Histone acetyltransferase KAT6B (1784 aa).

The SAMD1-like winged helix (WH) domain maps to 1-77 (MVKLANPLYT…LASYKDPDNP (77 aa)). Residues 72-98 (KDPDNPGRFSSVKPGTFPKSTKESRGS) form a disordered region. An H15 domain is found at 103-176 (RNVDWNKLLR…KDGPQYRVNY (74 aa)). 2 consecutive PHD-type zinc fingers follow at residues 213 to 272 (IPIC…CKTC) and 269 to 320 (CKTC…CRPK). A Phosphoserine modification is found at Ser-355. Residues 361–425 (GSMNAFTGRG…ECESGVEDCG (65 aa)) form a negatively regulates HAT activity region. Residue Lys-381 forms a Glycyl lysine isopeptide (Lys-Gly) (interchain with G-Cter in SUMO2) linkage. The MYST-type HAT domain occupies 423 to 697 (DCGRYPSVIE…LDPDSLRWTP (275 aa)). Residues 426–716 (RYPSVIEFGK…EEEREAEKEA (291 aa)) are catalytic. The segment at 456 to 481 (LYLCEFCLKYMKSKNILLRHSKKCGW) adopts a C2HC MYST-type zinc-finger fold. Residues 460–716 (EFCLKYMKSK…EEEREAEKEA (257 aa)) are interaction with BRPF1. N6-acetyllysine; by autocatalysis is present on Lys-523. Acetyl-CoA-binding positions include 564-568 (SCIMI) and 573-579 (QRQGFGR). Residue Glu-599 is the Proton donor/acceptor of the active site. Position 603 (Ser-603) interacts with acetyl-CoA. Disordered stretches follow at residues 730–884 (EQEV…RPMP), 904–1163 (RKAF…FKEV), 1195–1273 (SCNS…FQDC), and 1291–1330 (QSPQIATTLDDCQQSDHSSPVSSVHSHPGQSVRSVNSPSV). The span at 733–751 (VLSTRANSRQSPAKVQSKN) shows a compositional bias: polar residues. N6-acetyllysine occurs at positions 746, 750, and 752. At Ser-756 the chain carries Phosphoserine. Residues 777–819 (SEEEEEEEEDEEEEDEEEEEEEEEDEEEEEEEEEEEEEEEEEN) are compositionally biased toward acidic residues. Over residues 820–831 (IQSSPPRLTKPQ) the composition is skewed to polar residues. The span at 835–854 (IKRKRPFVLKKKRGRKRRRI) shows a compositional bias: basic residues. Residues 856-869 (SSVTTETISETTEV) show a composition bias toward low complexity. The span at 904-914 (RKAFQHQPGKK) shows a compositional bias: basic residues. Basic and acidic residues-rich tracts occupy residues 938–957 (MNDDSRNLKEGSKDNPEPLK) and 1055–1064 (EKPEDDLIKP). Positions 1065-1087 (EEEEEEEEEEEEEEGEEEEEEGG) are enriched in acidic residues. Composition is skewed to basic and acidic residues over residues 1088 to 1101 (NVEKDPDGAKSQEK) and 1107 to 1118 (SPEKEDSARLDD). Residues 1119 to 1128 (HEEEEEEDEE) show a composition bias toward acidic residues. The span at 1144-1163 (HMESAEVEKEELPRESFKEV) shows a compositional bias: basic and acidic residues. The segment covering 1209-1218 (AVPESDEEPP) has biased composition (acidic residues). Over residues 1224–1240 (QKQDQKNSKEVDTEFKE) the composition is skewed to basic and acidic residues. 2 stretches are compositionally biased toward polar residues: residues 1251-1263 (ETVQAVQSLTQES) and 1291-1302 (QSPQIATTLDDC). Residues 1271–1784 (QDCAETQEAC…QSLNGSYMRR (514 aa)) are interaction with RUNX1 and RUNX2. The segment covering 1305–1322 (SDHSSPVSSVHSHPGQSV) has biased composition (low complexity).

The protein belongs to the MYST (SAS/MOZ) family. In terms of assembly, component of the MOZ/MORF complex composed at least of ING5, KAT6A, KAT6B, MEAF6 and one of BRPF1, BRD1/BRPF2 and BRPF3. Interacts with RUNX1 and RUNX2. In terms of processing, autoacetylation at Lys-523 is required for proper function.

The protein resides in the nucleus. The enzyme catalyses L-lysyl-[protein] + acetyl-CoA = N(6)-acetyl-L-lysyl-[protein] + CoA + H(+). Its function is as follows. Histone acetyltransferase which may be involved in both positive and negative regulation of transcription. Required for RUNX2-dependent transcriptional activation. May be involved in cerebral cortex development. Component of the MOZ/MORF complex which has a histone H3 acetyltransferase activity. This chain is Histone acetyltransferase KAT6B (KAT6B), found in Macaca fascicularis (Crab-eating macaque).